The following is a 187-amino-acid chain: Peptidyl-tRNA hydrolase (187 aa).

Residue Y14 coordinates tRNA. The active-site Proton acceptor is H19. Residues F60 and N62 each coordinate tRNA.

This sequence belongs to the PTH family. Monomer.

The protein resides in the cytoplasm. It carries out the reaction an N-acyl-L-alpha-aminoacyl-tRNA + H2O = an N-acyl-L-amino acid + a tRNA + H(+). Functionally, hydrolyzes ribosome-free peptidyl-tRNAs (with 1 or more amino acids incorporated), which drop off the ribosome during protein synthesis, or as a result of ribosome stalling. Catalyzes the release of premature peptidyl moieties from peptidyl-tRNA molecules trapped in stalled 50S ribosomal subunits, and thus maintains levels of free tRNAs and 50S ribosomes. This Pseudothermotoga lettingae (strain ATCC BAA-301 / DSM 14385 / NBRC 107922 / TMO) (Thermotoga lettingae) protein is Peptidyl-tRNA hydrolase.